We begin with the raw amino-acid sequence, 235 residues long: MGNKVNPIGMRLQVNRTWDSRWYADTKDYGDLLLEDLAIRDFIKKECHQAGVARVIIERPHKKCRVTIHTARPGVIIGKKGADIEGLRQKIAKMTASELHLNIVEVRKPELDAALVGESIAQQLERRVSFRRAMKRAVQNAMRMGALGIRVNVAGRLGGAEIARTEWYREGRVPLHTLRADIDYAHVEAATAYGIIGIKTWIFKGEIMEHDPAARDRKAQELQDGPAPRGAGGRR.

Residues 39–107 (IRDFIKKECH…ELHLNIVEVR (69 aa)) enclose the KH type-2 domain. The interval 213–235 (AARDRKAQELQDGPAPRGAGGRR) is disordered.

It belongs to the universal ribosomal protein uS3 family. As to quaternary structure, part of the 30S ribosomal subunit. Forms a tight complex with proteins S10 and S14.

Functionally, binds the lower part of the 30S subunit head. Binds mRNA in the 70S ribosome, positioning it for translation. This chain is Small ribosomal subunit protein uS3, found in Roseobacter denitrificans (strain ATCC 33942 / OCh 114) (Erythrobacter sp. (strain OCh 114)).